The primary structure comprises 328 residues: Ferredoxin--NADP reductase (328 aa).

Glutamate 34, glutamine 42, tyrosine 47, valine 87, phenylalanine 120, aspartate 283, and threonine 323 together coordinate FAD.

It belongs to the ferredoxin--NADP reductase type 2 family. As to quaternary structure, homodimer. Requires FAD as cofactor.

It carries out the reaction 2 reduced [2Fe-2S]-[ferredoxin] + NADP(+) + H(+) = 2 oxidized [2Fe-2S]-[ferredoxin] + NADPH. The polypeptide is Ferredoxin--NADP reductase (Pediococcus pentosaceus (strain ATCC 25745 / CCUG 21536 / LMG 10740 / 183-1w)).